A 76-amino-acid polypeptide reads, in one-letter code: Small ribosomal subunit protein bS16 (76 aa).

The protein belongs to the bacterial ribosomal protein bS16 family.

This chain is Small ribosomal subunit protein bS16, found in Helicobacter pylori (strain HPAG1).